The sequence spans 280 residues: Tobamovirus multiplication protein 2A (280 aa).

Topologically, residues 1-13 (MACRGCLECLLKL) are cytoplasmic. Residues 14–34 (LNFLLAVAGLGMIGYGIYLFV) form a helical membrane-spanning segment. Residues 35–78 (EYKRVTDNSVTFDLTNGDQSYVSFGRPILMAVSLSSNIFDNLPK) are Extracellular-facing. Residues 79-99 (AWFIYLFIGIGVALFVISCCG) form a helical membrane-spanning segment. The Cytoplasmic portion of the chain corresponds to 100–113 (CVGTCSRSVCCLSC). Residues 114–134 (YSLLLILLILVELGFAAFIFF) traverse the membrane as a helical segment. Residues 135 to 162 (DNSWRDELPSDRTGNFDTIYNFLRENWK) are Extracellular-facing. Residues 163 to 183 (IVRWVALGAVVFEALLFLLAL) form a helical membrane-spanning segment. The Cytoplasmic portion of the chain corresponds to 184–280 (MVRAANTPAE…NEEKGRCTIM (97 aa)). Residues S196 and S233 each carry the phosphoserine modification. The segment at 258 to 280 (SESHRFQQMPAQPNEEKGRCTIM) is disordered. A compositionally biased stretch (basic and acidic residues) spans 271–280 (NEEKGRCTIM).

It belongs to the tetraspanin (TM4SF) family. Homodimer. Constituent of tobamovirus replication complex. Interacts with TOM1. Expressed in rosette leaves.

It is found in the vacuole membrane. Functionally, necessary for the efficient intracellular multiplication of tobamoviruses, being a component of the replication complex. This Arabidopsis thaliana (Mouse-ear cress) protein is Tobamovirus multiplication protein 2A (TOM2A).